We begin with the raw amino-acid sequence, 403 residues long: Phosphopentomutase (403 aa).

Mn(2+) is bound by residues aspartate 13, aspartate 298, histidine 303, aspartate 339, histidine 340, and histidine 351.

This sequence belongs to the phosphopentomutase family. Mn(2+) is required as a cofactor.

It localises to the cytoplasm. The catalysed reaction is 2-deoxy-alpha-D-ribose 1-phosphate = 2-deoxy-D-ribose 5-phosphate. It catalyses the reaction alpha-D-ribose 1-phosphate = D-ribose 5-phosphate. Its pathway is carbohydrate degradation; 2-deoxy-D-ribose 1-phosphate degradation; D-glyceraldehyde 3-phosphate and acetaldehyde from 2-deoxy-alpha-D-ribose 1-phosphate: step 1/2. In terms of biological role, isomerase that catalyzes the conversion of deoxy-ribose 1-phosphate (dRib-1-P) and ribose 1-phosphate (Rib-1-P) to deoxy-ribose 5-phosphate (dRib-5-P) and ribose 5-phosphate (Rib-5-P), respectively. The polypeptide is Phosphopentomutase (Streptococcus pyogenes serotype M12 (strain MGAS2096)).